We begin with the raw amino-acid sequence, 202 residues long: Phosphoenolpyruvate guanylyltransferase (202 aa).

Phosphoenolpyruvate-binding residues include Thr-140, Gly-156, and Ser-159.

It belongs to the CofC family.

It catalyses the reaction phosphoenolpyruvate + GTP + H(+) = enolpyruvoyl-2-diphospho-5'-guanosine + diphosphate. The protein operates within cofactor biosynthesis; coenzyme F420 biosynthesis. Guanylyltransferase that catalyzes the activation of phosphoenolpyruvate (PEP) as enolpyruvoyl-2-diphospho-5'-guanosine, via the condensation of PEP with GTP. It is involved in the biosynthesis of coenzyme F420, a hydride carrier cofactor. This Chloroflexus aggregans (strain MD-66 / DSM 9485) protein is Phosphoenolpyruvate guanylyltransferase.